A 167-amino-acid chain; its full sequence is NAD(P)H-quinone oxidoreductase subunit I, chloroplastic (167 aa).

4Fe-4S ferredoxin-type domains follow at residues 55–84 (GRIH…VDWK) and 95–124 (LNYS…MTEE). Residues Cys-64, Cys-67, Cys-70, Cys-74, Cys-104, Cys-107, Cys-110, and Cys-114 each coordinate [4Fe-4S] cluster.

The protein belongs to the complex I 23 kDa subunit family. In terms of assembly, NDH is composed of at least 16 different subunits, 5 of which are encoded in the nucleus. [4Fe-4S] cluster serves as cofactor.

Its subcellular location is the plastid. The protein localises to the chloroplast thylakoid membrane. The catalysed reaction is a plastoquinone + NADH + (n+1) H(+)(in) = a plastoquinol + NAD(+) + n H(+)(out). It carries out the reaction a plastoquinone + NADPH + (n+1) H(+)(in) = a plastoquinol + NADP(+) + n H(+)(out). NDH shuttles electrons from NAD(P)H:plastoquinone, via FMN and iron-sulfur (Fe-S) centers, to quinones in the photosynthetic chain and possibly in a chloroplast respiratory chain. The immediate electron acceptor for the enzyme in this species is believed to be plastoquinone. Couples the redox reaction to proton translocation, and thus conserves the redox energy in a proton gradient. The chain is NAD(P)H-quinone oxidoreductase subunit I, chloroplastic from Draba nemorosa (Woodland whitlowgrass).